A 294-amino-acid polypeptide reads, in one-letter code: 4-hydroxy-tetrahydrodipicolinate synthase (294 aa).

Thr-44 contacts pyruvate. Tyr-132 functions as the Proton donor/acceptor in the catalytic mechanism. Residue Lys-161 is the Schiff-base intermediate with substrate of the active site. Ile-203 serves as a coordination point for pyruvate.

The protein belongs to the DapA family. As to quaternary structure, homotetramer; dimer of dimers.

The protein localises to the cytoplasm. The catalysed reaction is L-aspartate 4-semialdehyde + pyruvate = (2S,4S)-4-hydroxy-2,3,4,5-tetrahydrodipicolinate + H2O + H(+). It participates in amino-acid biosynthesis; L-lysine biosynthesis via DAP pathway; (S)-tetrahydrodipicolinate from L-aspartate: step 3/4. Its function is as follows. Catalyzes the condensation of (S)-aspartate-beta-semialdehyde [(S)-ASA] and pyruvate to 4-hydroxy-tetrahydrodipicolinate (HTPA). The polypeptide is 4-hydroxy-tetrahydrodipicolinate synthase (Aquifex aeolicus (strain VF5)).